Reading from the N-terminus, the 296-residue chain is Probable ribosomal RNA small subunit methyltransferase A (296 aa).

The span at 1 to 16 (MTDATSGSDPDSTTPV) shows a compositional bias: polar residues. The interval 1–25 (MTDATSGSDPDSTTPVDLTGEDFRD) is disordered. Residues His-44, Leu-46, Gly-72, Glu-93, Asp-121, and Asn-136 each contribute to the S-adenosyl-L-methionine site.

Belongs to the class I-like SAM-binding methyltransferase superfamily. rRNA adenine N(6)-methyltransferase family. RsmA subfamily.

Its subcellular location is the cytoplasm. Functionally, specifically dimethylates two adjacent adenosines in the loop of a conserved hairpin near the 3'-end of 16S rRNA in the 30S particle. May play a critical role in biogenesis of 30S subunits. The chain is Probable ribosomal RNA small subunit methyltransferase A from Haloquadratum walsbyi (strain DSM 16790 / HBSQ001).